Consider the following 639-residue polypeptide: Chaperone protein DnaK (639 aa).

Residue threonine 198 is modified to Phosphothreonine; by autocatalysis. A disordered region spans residues 604–639 (KSQAQGGDNADAGKQANAAADDVVDAEFEEVKDDKK). Over residues 606–624 (QAQGGDNADAGKQANAAAD) the composition is skewed to low complexity. Over residues 625-639 (DVVDAEFEEVKDDKK) the composition is skewed to acidic residues.

It belongs to the heat shock protein 70 family.

Acts as a chaperone. The sequence is that of Chaperone protein DnaK from Shewanella baltica (strain OS223).